We begin with the raw amino-acid sequence, 430 residues long: Glutamate-1-semialdehyde 2,1-aminomutase (430 aa).

At K267 the chain carries N6-(pyridoxal phosphate)lysine.

Belongs to the class-III pyridoxal-phosphate-dependent aminotransferase family. HemL subfamily. In terms of assembly, homodimer. It depends on pyridoxal 5'-phosphate as a cofactor.

The protein localises to the cytoplasm. The catalysed reaction is (S)-4-amino-5-oxopentanoate = 5-aminolevulinate. The protein operates within porphyrin-containing compound metabolism; protoporphyrin-IX biosynthesis; 5-aminolevulinate from L-glutamyl-tRNA(Glu): step 2/2. The protein is Glutamate-1-semialdehyde 2,1-aminomutase of Anaeromyxobacter dehalogenans (strain 2CP-C).